The following is a 533-amino-acid chain: Glucose-6-phosphate isomerase (533 aa).

The active-site Proton donor is the E330. Active-site residues include H359 and K461.

It belongs to the GPI family.

It is found in the cytoplasm. It catalyses the reaction alpha-D-glucose 6-phosphate = beta-D-fructose 6-phosphate. It participates in carbohydrate biosynthesis; gluconeogenesis. It functions in the pathway carbohydrate degradation; glycolysis; D-glyceraldehyde 3-phosphate and glycerone phosphate from D-glucose: step 2/4. Its function is as follows. Catalyzes the reversible isomerization of glucose-6-phosphate to fructose-6-phosphate. The chain is Glucose-6-phosphate isomerase from Prochlorococcus marinus (strain SARG / CCMP1375 / SS120).